Reading from the N-terminus, the 417-residue chain is Probable glucuronosyltransferase Os01g0926700 (417 aa).

Residues 1–3 (MRR) are Cytoplasmic-facing. Residues 4 to 24 (WVLAIAILAAAVCFFLGAQAQ) form a helical; Signal-anchor for type II membrane protein membrane-spanning segment. Topologically, residues 25-417 (EVRQGHQTER…AGPVGDLKPW (393 aa)) are lumenal. N144 and N405 each carry an N-linked (GlcNAc...) asparagine glycan.

The protein belongs to the glycosyltransferase 47 family.

It localises to the golgi apparatus membrane. Its function is as follows. Involved in the synthesis of glucuronoxylan hemicellulose in secondary cell walls. The polypeptide is Probable glucuronosyltransferase Os01g0926700 (Oryza sativa subsp. japonica (Rice)).